The sequence spans 602 residues: Fructan 1-exohydrolase (602 aa).

Residues 1 to 19 (MAQAWAFLLLPVLLLSSYA) form the signal peptide. Asp81 is an active-site residue. N-linked (GlcNAc...) asparagine glycosylation is found at Asn174, Asn242, and Asn254. A disulfide bridge connects residues Cys452 and Cys498.

Belongs to the glycosyl hydrolase 32 family. Detected in leaves, with maximum levels at the leaf tip.

The catalysed reaction is Hydrolysis of terminal, non-reducing (2-&gt;1)-linked beta-D-fructofuranose residues in fructans.. With respect to regulation, inhibited by sucrose. Hydrolyzes inulin-type beta-(2,1)-fructans. Has low activity against beta-(2,6)-linked fructans. May play a role as a beta-(2,1)-trimmer during graminan biosynthesis. The chain is Fructan 1-exohydrolase from Bromus pictus (Patagonian grass).